A 355-amino-acid chain; its full sequence is Protein RecA (355 aa).

Gly-65–Thr-72 contacts ATP.

This sequence belongs to the RecA family.

Its subcellular location is the cytoplasm. Functionally, can catalyze the hydrolysis of ATP in the presence of single-stranded DNA, the ATP-dependent uptake of single-stranded DNA by duplex DNA, and the ATP-dependent hybridization of homologous single-stranded DNAs. It interacts with LexA causing its activation and leading to its autocatalytic cleavage. This chain is Protein RecA, found in Pseudomonas putida (Arthrobacter siderocapsulatus).